We begin with the raw amino-acid sequence, 160 residues long: Interleukin-36 alpha (160 aa).

A propeptide spanning residues 1–7 (MNKEKEL) is cleaved from the precursor. At Tyr-98 the chain carries 3'-nitrotyrosine.

This sequence belongs to the IL-1 family. In terms of assembly, interacts with TMED10; the interaction mediates the translocation from the cytoplasm into the ERGIC (endoplasmic reticulum-Golgi intermediate compartment) and thereby secretion. In terms of processing, N-terminal truncation leads to a dramatic enhancement of its activity (&gt;1000-fold). In terms of tissue distribution, highly expressed in embryonic tissue and in tissues containing epithelial cells. Elevated expression levels are detected in chronic kidney disease; expressed inepithelia from the distal convoluted tubules (DCTs) to the cortical collecting ducts (CCDs) in single nephrons (at protein level).

Its subcellular location is the cytoplasm. It is found in the secreted. Functionally, cytokine that binds to and signals through the IL1RL2/IL-36R receptor which in turn activates NF-kappa-B and MAPK signaling pathways in target cells linked to a pro-inflammatory response. Part of the IL-36 signaling system that is thought to be present in epithelial barriers and to take part in local inflammatory response; similar to the IL-1 system with which it shares the coreceptor IL1RAP. Seems to be involved in skin inflammatory response by acting on keratinocytes, dendritic cells and indirectly on T-cells to drive tissue infiltration, cell maturation and cell proliferation. Induces the production of pro-inflammatory cytokines, including IL-12, Il-1 beta, IL-6, TNF-alpha and IL-23 in bone marrow-derived dendritic cells (BMDCs). Involved in dendritic cell maturation by stimulating the surface expression of CD80, CD86 and MHC class II. Induces the production of IFN-gamma, IL-4 and IL-17 by cultured CD4(+) T-cells and splenocytes. May play a role in pro-inflammatory effects in the lung: induces the expression of CXCL1 and CXCL2 in the lung, and the expression of TNF-alpha, IL-36c, IL-1A, IL-1B, CXCL1 and CXCL2 in isolated splenic CD11c(+) alveolar macrophages. May be involved in T-cell maturation by stimulating the surface expression of CD40 and modestly CD80 and CD86 in splenic CD11c(+) cells. May be involved in CD4(+) T-cell proliferation. Induces NF-kappa B activation in macrophages. In Mus musculus (Mouse), this protein is Interleukin-36 alpha.